A 946-amino-acid chain; its full sequence is MSISMKDVDPAFRGVGQKDGLEVWRIENFKPVPVPTSSHGKFYMGDSYIILKTTALKNGSFRHDLHYWLGKDTSQDEAGTAAILTVELDAALGGRAVQYREVQGGETEKLLSYFRPCIMPQPGGVASGFNHVEVNQQDHVTRLYVCQGKHVVHVKEVPFVRSSLNHEDIFILDTANKIFQFNGSNSCIQERAKALEVVQYIKDTFHEGKCEVAAVEDGKLMADTEAGEFWGLFGGFAPLPKKTSSEDNGDDKETVTKLLCFNQGTLEHISFESLEHELLETNKCYLLDCGAEMYVWMGRGTSLQVRKGASEAAEKLLIDENRKGSNVIKVIEGFETIMFKSKFNKWPPTPDLKLSSEDGRGKVAALLRSQGLDVKGLMKAAPEEEEPQPYIDCTGHLQVWRVNGDGKTLLSSSDQSKLYTGDCYIFQYTYTGDDKEECLIGTWFGKKSVEEDRTSAISLASKMFQAAKFQAAQARLYEGKEPIQFFVIFQSLQVFKGGLSSGYKNFIAVNGTDDDTYVEGGLALFRIQGSGSENMQAIQVDAVSSSLNSSYCYILHNGNTVFTWTGNLTTSLDNDLVERQLDVIKPDLPSRSQKEGRETDQFWELLGGKCKYSNKKIGKENESDPHLFSCILSKENLKVKEIHHFTQDDLMAEDIFVLDCRTDLFVWVGQEVDAKLRSQAMDIGEKFLLHDFLMENLSQDTPIFIVTEGSEPQFFTRFFTWDSAKSLMHGSSYQRKLAIVKGGATPSLDKPKRRTPAFSGRNAGQDKSQQRTRSMSHSPERHRIRGRSPAFTAIASAFENPSTRYLSTPPPAVKKLFPRSGGSELPKTSSKQSAINALTSAFEGPTKSTIPKSVKASPEAEKAIQEEGSTIGESENEPEDDENSTIYPYERLTTTSDDPAPDIDVTKREVYLSSVEFTEKFGMTRASFKNLPKWKQNRLKSDLQLF.

4 Gelsolin-like repeats span residues 28–109, 152–219, 274–339, and 641–715; these read NFKP…ETEK, VHVK…EDGK, LEHE…TIMF, and EIHH…PQFF. Disordered stretches follow at residues 744–789, 801–832, and 844–902; these read ATPS…GRSP, PSTR…SSKQ, and GPTK…PAPD. A compositionally biased stretch (polar residues) spans 765 to 777; sequence QDKSQQRTRSMSH. Acidic residues predominate over residues 874-883; sequence SENEPEDDEN. The HP domain occupies 881–946; it reads DENSTIYPYE…NRLKSDLQLF (66 aa).

The protein belongs to the villin/gelsolin family.

The protein localises to the cytoplasm. It is found in the cytoskeleton. Its function is as follows. Ca(2+)-regulated actin-binding protein. Binds actin microfilaments (MFs). Involved in actin filament bundling, severing and capping. Caps the barbed end of actin filaments and is able to sever them in a calcium-dependent manner. In Oryza sativa subsp. japonica (Rice), this protein is Villin-4.